Here is a 382-residue protein sequence, read N- to C-terminus: Lipid-A-disaccharide synthase (382 aa).

This sequence belongs to the LpxB family.

It catalyses the reaction 2-N,3-O-bis[(3R)-3-hydroxytetradecanoyl]-alpha-D-glucosaminyl 1-phosphate + UDP-2-N,3-O-bis[(3R)-3-hydroxytetradecanoyl]-alpha-D-glucosamine = lipid A disaccharide (E. coli) + UDP + H(+). The catalysed reaction is a lipid X + a UDP-2-N,3-O-bis[(3R)-3-hydroxyacyl]-alpha-D-glucosamine = a lipid A disaccharide + UDP + H(+). Its pathway is glycolipid biosynthesis; lipid IV(A) biosynthesis; lipid IV(A) from (3R)-3-hydroxytetradecanoyl-[acyl-carrier-protein] and UDP-N-acetyl-alpha-D-glucosamine: step 5/6. Condensation of UDP-2,3-diacylglucosamine and 2,3-diacylglucosamine-1-phosphate to form lipid A disaccharide, a precursor of lipid A, a phosphorylated glycolipid that anchors the lipopolysaccharide to the outer membrane of the cell. This Serratia proteamaculans (strain 568) protein is Lipid-A-disaccharide synthase.